Here is a 437-residue protein sequence, read N- to C-terminus: GTPase Obg (437 aa).

The region spanning 2-160 is the Obg domain; the sequence is SLFLDTARIE…KILLLELRVL (159 aa). An OBG-type G domain is found at 161 to 338; it reads ADVGLVGFPS…LLARTSELLA (178 aa). Residues 167 to 174, 192 to 196, 214 to 217, 284 to 287, and 319 to 321 each bind GTP; these read GFPSVGKS, FTTIT, DMPG, NKMD, and SGL. The Mg(2+) site is built by Ser-174 and Thr-194. The OCT domain occupies 359–437; sequence GFEEEEKPFK…IQKFEFEFVD (79 aa).

Belongs to the TRAFAC class OBG-HflX-like GTPase superfamily. OBG GTPase family. In terms of assembly, monomer. Mg(2+) is required as a cofactor.

The protein resides in the cytoplasm. An essential GTPase which binds GTP, GDP and possibly (p)ppGpp with moderate affinity, with high nucleotide exchange rates and a fairly low GTP hydrolysis rate. Plays a role in control of the cell cycle, stress response, ribosome biogenesis and in those bacteria that undergo differentiation, in morphogenesis control. This is GTPase Obg from Lactococcus lactis subsp. lactis (strain IL1403) (Streptococcus lactis).